A 165-amino-acid polypeptide reads, in one-letter code: UPF0303 protein BceJ2315_15790 (165 aa).

It belongs to the UPF0303 family.

This is UPF0303 protein BceJ2315_15790 from Burkholderia cenocepacia (strain ATCC BAA-245 / DSM 16553 / LMG 16656 / NCTC 13227 / J2315 / CF5610) (Burkholderia cepacia (strain J2315)).